The sequence spans 887 residues: 3-hydroxy-3-methylglutaryl-coenzyme A reductase (887 aa).

At 1–9 the chain is on the cytoplasmic side; that stretch reads MLSRLFRMH. A helical membrane pass occupies residues 10-39; sequence GLFVASHPWEVIVGTVTLTICMMSMNMFTG. Topologically, residues 40–56 are lumenal; sequence NNKICGWNYECPKFEED. A helical membrane pass occupies residues 57–78; it reads VLSSDIIILTITRCIAILYIYF. Positions 61-218 constitute an SSD domain; it reads DIIILTITRC…MTFFPACVSL (158 aa). An INSIG-binding motif motif is present at residues 75–78; that stretch reads YIYF. Residues 79-89 lie on the Cytoplasmic side of the membrane; sequence QFQNLRQLGSK. Lys-89 is covalently cross-linked (Glycyl lysine isopeptide (Lys-Gly) (interchain with G-Cter in ubiquitin)). The chain crosses the membrane as a helical span at residues 90 to 114; the sequence is YILGIAGLFTIFSSFVFSTVVIHFL. The Lumenal portion of the chain corresponds to 115–123; the sequence is DKELTGLNE. A helical transmembrane segment spans residues 124–149; that stretch reads ALPFFLLLIDLSRASALAKFALSSNS. Residues 150-159 lie on the Cytoplasmic side of the membrane; sequence QDEVRENIAR. The helical transmembrane segment at 160 to 187 threads the bilayer; it reads GMAILGPTFTLDALVECLVIGVGTMSGV. Topologically, residues 188-191 are lumenal; that stretch reads RQLE. Residues 192–220 traverse the membrane as a helical segment; it reads IMCCFGCMSVLANYFVFMTFFPACVSLVL. Topologically, residues 221–248 are cytoplasmic; sequence ELSRESREGRPIWQLSHFARVLEEEENK. A Glycyl lysine isopeptide (Lys-Gly) (interchain with G-Cter in ubiquitin) cross-link involves residue Lys-248. The helical transmembrane segment at 249-275 threads the bilayer; it reads PNPVTQRVKMIMSLGLVLVHAHSRWIA. At 276–314 the chain is on the lumenal side; it reads DPSPQNSTTEHSKVSLGLDEDVSKRIEPSVSLWQFYLSK. The N-linked (GlcNAc...) asparagine glycan is linked to Asn-281. The chain crosses the membrane as a helical span at residues 315–339; that stretch reads MISMDIEQVVTLSLAFLLAVKYIFF. Over 340–887 the chain is Cytoplasmic; sequence EQAETESTLS…LQGTCTKKAA (548 aa). Active-site charge relay system residues include Glu-558, Lys-690, and Asp-766. His-865 serves as the catalytic Proton donor. Ser-871 is modified (phosphoserine; by AMPK).

This sequence belongs to the HMG-CoA reductase family. Homotetramer. Homodimer. Interacts (via its SSD) with INSIG1; the interaction, accelerated by sterols, leads to the recruitment of HMGCR to AMFR/gp78 for its ubiquitination by the sterol-mediated ERAD pathway. Interacts with UBIAD1. Post-translationally, undergoes sterol-mediated ubiquitination and ER-associated degradation (ERAD). Accumulation of sterols in the endoplasmic reticulum (ER) membrane, triggers binding of the reductase to the ER membrane protein INSIG1 or INSIG2. The INSIG1 binding leads to the recruitment of the ubiquitin ligase, AMFR/gp78, RNF139 or RNF145, initiating ubiquitination of the reductase. The ubiquitinated reductase is then extracted from the ER membrane and delivered to cytosolic 26S proteosomes by a mechanism probably mediated by the ATPase Valosin-containing protein VCP/p97. The INSIG2-binding leads to the recruitment of the ubiquitin ligase RNF139, initiating ubiquitination of the reductase. Lys-248 is the main site of ubiquitination. Ubiquitination is enhanced by the presence of a geranylgeranylated protein. In terms of processing, N-glycosylated. Deglycosylated by NGLY1 on release from the endoplasmic reticulum (ER) in a sterol-mediated manner. Phosphorylated. Phosphorylation at Ser-871 reduces the catalytic activity.

The protein localises to the endoplasmic reticulum membrane. It localises to the peroxisome membrane. The enzyme catalyses (R)-mevalonate + 2 NADP(+) + CoA = (3S)-3-hydroxy-3-methylglutaryl-CoA + 2 NADPH + 2 H(+). Its pathway is metabolic intermediate biosynthesis; (R)-mevalonate biosynthesis; (R)-mevalonate from acetyl-CoA: step 3/3. Regulated by a negative feedback mechanism through sterols and non-sterol metabolites derived from mevalonate. Phosphorylation at Ser-871 down-regulates the catalytic activity. Functionally, catalyzes the conversion of (3S)-hydroxy-3-methylglutaryl-CoA (HMG-CoA) to mevalonic acid, the rate-limiting step in the synthesis of cholesterol and other isoprenoids, thus plays a critical role in cellular cholesterol homeostasis. The chain is 3-hydroxy-3-methylglutaryl-coenzyme A reductase (HMGCR) from Mesocricetus auratus (Golden hamster).